The chain runs to 378 residues: Cytochrome b (378 aa).

The next 4 membrane-spanning stretches (helical) occupy residues 34–54, 78–100, 113–133, and 179–199; these read FGSL…FLSM, WLLR…CHIG, TWNV…VGYV, and FFSF…VHLL. Heme b contacts are provided by His-84 and His-98. His-183 and His-197 together coordinate heme b. His-202 is a binding site for a ubiquinone. 4 consecutive transmembrane segments (helical) span residues 225–245, 289–306, 313–342, and 350–369; these read YSTK…IVVL, LGGV…FCLP, KFRS…WIGM, and IFIG…LNPL.

This sequence belongs to the cytochrome b family. In terms of assembly, the main subunits of complex b-c1 are: cytochrome b, cytochrome c1 and the Rieske protein. Requires heme b as cofactor.

The protein resides in the mitochondrion inner membrane. Functionally, component of the ubiquinol-cytochrome c reductase complex (complex III or cytochrome b-c1 complex) that is part of the mitochondrial respiratory chain. The b-c1 complex mediates electron transfer from ubiquinol to cytochrome c. Contributes to the generation of a proton gradient across the mitochondrial membrane that is then used for ATP synthesis. This Loxocorone allax (Goblet worm) protein is Cytochrome b (mt:Cyt-b).